We begin with the raw amino-acid sequence, 228 residues long: UPF0134 protein MPN_137 (228 aa).

This sequence belongs to the UPF0134 family.

The polypeptide is UPF0134 protein MPN_137 (Mycoplasma pneumoniae (strain ATCC 29342 / M129 / Subtype 1) (Mycoplasmoides pneumoniae)).